Reading from the N-terminus, the 258-residue chain is 4-hydroxy-tetrahydrodipicolinate reductase (258 aa).

Residues 8-13 (GVTGRM), 93-95 (GTT), and 117-120 (AANF) each bind NAD(+). His-149 functions as the Proton donor/acceptor in the catalytic mechanism. His-150 lines the (S)-2,3,4,5-tetrahydrodipicolinate pocket. Lys-153 acts as the Proton donor in catalysis. 159–160 (GT) lines the (S)-2,3,4,5-tetrahydrodipicolinate pocket.

The protein belongs to the DapB family.

It localises to the cytoplasm. The catalysed reaction is (S)-2,3,4,5-tetrahydrodipicolinate + NAD(+) + H2O = (2S,4S)-4-hydroxy-2,3,4,5-tetrahydrodipicolinate + NADH + H(+). It catalyses the reaction (S)-2,3,4,5-tetrahydrodipicolinate + NADP(+) + H2O = (2S,4S)-4-hydroxy-2,3,4,5-tetrahydrodipicolinate + NADPH + H(+). It participates in amino-acid biosynthesis; L-lysine biosynthesis via DAP pathway; (S)-tetrahydrodipicolinate from L-aspartate: step 4/4. In terms of biological role, catalyzes the conversion of 4-hydroxy-tetrahydrodipicolinate (HTPA) to tetrahydrodipicolinate. The chain is 4-hydroxy-tetrahydrodipicolinate reductase from Thermomicrobium roseum (strain ATCC 27502 / DSM 5159 / P-2).